Here is a 463-residue protein sequence, read N- to C-terminus: NADH dehydrogenase [ubiquinone] iron-sulfur protein 2, mitochondrial (463 aa).

A mitochondrion-targeting transit peptide spans 1-33; the sequence is MAALRALRCLRGVGAPVLRPGSGIRLPSQPSRG. Position 62 is an N6-acetyllysine (K62). R118 carries the post-translational modification Symmetric dimethylarginine. The [4Fe-4S] cluster site is built by C326, C332, and C347.

The protein belongs to the complex I 49 kDa subunit family. Core subunit of respiratory chain NADH dehydrogenase (Complex I) which is composed of 45 different subunits. Component of the iron-sulfur (IP) fragment of the enzyme. Interacts with NDUFAF3. Interacts with NDUFAF7. Interacts with CERS2. It depends on [4Fe-4S] cluster as a cofactor. Post-translationally, dimethylation at Arg-118 by NDUFAF7 takes place after NDUFS2 assembles into the complex I, leading to stabilize the early intermediate complex.

It localises to the mitochondrion inner membrane. It carries out the reaction a ubiquinone + NADH + 5 H(+)(in) = a ubiquinol + NAD(+) + 4 H(+)(out). In terms of biological role, core subunit of the mitochondrial membrane respiratory chain NADH dehydrogenase (Complex I) which catalyzes electron transfer from NADH through the respiratory chain, using ubiquinone as an electron acceptor. Essential for the catalytic activity and assembly of complex I. Redox-sensitive, critical component of the oxygen-sensing pathway in the pulmonary vasculature which plays a key role in acute pulmonary oxygen-sensing and hypoxic pulmonary vasoconstriction. Plays an important role in carotid body sensing of hypoxia. Essential for glia-like neural stem and progenitor cell proliferation, differentiation and subsequent oligodendrocyte or neuronal maturation. This Mus musculus (Mouse) protein is NADH dehydrogenase [ubiquinone] iron-sulfur protein 2, mitochondrial (Ndufs2).